A 390-amino-acid chain; its full sequence is tRNA(Met) cytidine acetate ligase (390 aa).

ATP contacts are provided by residues 7–20, Gly-101, Asn-162, and Arg-187; that span reads VVEYNPFHNGHKLH.

This sequence belongs to the TmcAL family.

It is found in the cytoplasm. It catalyses the reaction cytidine(34) in elongator tRNA(Met) + acetate + ATP = N(4)-acetylcytidine(34) in elongator tRNA(Met) + AMP + diphosphate. In terms of biological role, catalyzes the formation of N(4)-acetylcytidine (ac(4)C) at the wobble position of elongator tRNA(Met), using acetate and ATP as substrates. First activates an acetate ion to form acetyladenylate (Ac-AMP) and then transfers the acetyl group to tRNA to form ac(4)C34. The sequence is that of tRNA(Met) cytidine acetate ligase from Listeria monocytogenes serovar 1/2a (strain ATCC BAA-679 / EGD-e).